A 1059-amino-acid chain; its full sequence is Carbamoyl phosphate synthase large chain (1059 aa).

Residues 1–401 (MPKRKDIQKV…AMLKAVRSLE (401 aa)) form a carboxyphosphate synthetic domain region. Arg129, Arg169, Gly175, Gly176, Arg208, Ile210, Glu215, Gly241, Val242, His243, Gln284, and Glu298 together coordinate ATP. Residues 133–327 (KALMERLNEP…IAKMAAKIAV (195 aa)) enclose the ATP-grasp 1 domain. Mg(2+)-binding residues include Gln284, Glu298, and Asn300. Mn(2+)-binding residues include Gln284, Glu298, and Asn300. The interval 402-546 (IGVTGLNDLT…YATYERENES (145 aa)) is oligomerization domain. The interval 547-929 (VRSKKPSVIV…ALYKAFVASN (383 aa)) is carbamoyl phosphate synthetic domain. One can recognise an ATP-grasp 2 domain in the interval 671–861 (DQVIKTLALP…LAQLATRVML (191 aa)). Residues Arg707, Ser746, Leu748, Glu752, Gly777, Val778, His779, Ser780, Gln820, and Glu832 each contribute to the ATP site. The Mg(2+) site is built by Gln820, Glu832, and Asn834. Residues Gln820, Glu832, and Asn834 each contribute to the Mn(2+) site. Positions 930–1059 (IKVPQYGNVL…SRSFTVNEMK (130 aa)) constitute an MGS-like domain. The interval 930–1059 (IKVPQYGNVL…SRSFTVNEMK (130 aa)) is allosteric domain.

The protein belongs to the CarB family. As to quaternary structure, composed of two chains; the small (or glutamine) chain promotes the hydrolysis of glutamine to ammonia, which is used by the large (or ammonia) chain to synthesize carbamoyl phosphate. Tetramer of heterodimers (alpha,beta)4. The cofactor is Mg(2+). Mn(2+) is required as a cofactor.

It catalyses the reaction hydrogencarbonate + L-glutamine + 2 ATP + H2O = carbamoyl phosphate + L-glutamate + 2 ADP + phosphate + 2 H(+). The catalysed reaction is hydrogencarbonate + NH4(+) + 2 ATP = carbamoyl phosphate + 2 ADP + phosphate + 2 H(+). Its pathway is amino-acid biosynthesis; L-arginine biosynthesis; carbamoyl phosphate from bicarbonate: step 1/1. The protein operates within pyrimidine metabolism; UMP biosynthesis via de novo pathway; (S)-dihydroorotate from bicarbonate: step 1/3. In terms of biological role, large subunit of the glutamine-dependent carbamoyl phosphate synthetase (CPSase). CPSase catalyzes the formation of carbamoyl phosphate from the ammonia moiety of glutamine, carbonate, and phosphate donated by ATP, constituting the first step of 2 biosynthetic pathways, one leading to arginine and/or urea and the other to pyrimidine nucleotides. The large subunit (synthetase) binds the substrates ammonia (free or transferred from glutamine from the small subunit), hydrogencarbonate and ATP and carries out an ATP-coupled ligase reaction, activating hydrogencarbonate by forming carboxy phosphate which reacts with ammonia to form carbamoyl phosphate. This chain is Carbamoyl phosphate synthase large chain, found in Leuconostoc citreum (strain KM20).